A 163-amino-acid chain; its full sequence is uncharacterized protein (163 aa).

The N-acetyltransferase domain occupies 7 to 162 (ISISAVKLPQ…NVVYMRLEMS (156 aa)).

This sequence belongs to the acetyltransferase family.

The protein localises to the cytoplasm. Its subcellular location is the nucleus. This is an uncharacterized protein from Schizosaccharomyces pombe (strain 972 / ATCC 24843) (Fission yeast).